The following is a 139-amino-acid chain: Ribonuclease P protein component (139 aa).

Belongs to the RnpA family. In terms of assembly, consists of a catalytic RNA component (M1 or rnpB) and a protein subunit.

It carries out the reaction Endonucleolytic cleavage of RNA, removing 5'-extranucleotides from tRNA precursor.. In terms of biological role, RNaseP catalyzes the removal of the 5'-leader sequence from pre-tRNA to produce the mature 5'-terminus. It can also cleave other RNA substrates such as 4.5S RNA. The protein component plays an auxiliary but essential role in vivo by binding to the 5'-leader sequence and broadening the substrate specificity of the ribozyme. The protein is Ribonuclease P protein component of Paraburkholderia xenovorans (strain LB400).